The chain runs to 322 residues: MELFPSQPDLYLKISRRREEEQEKESQELQEQEVERRLGFQSKASDLDNKSSNNLIHTLQFTSNNEATKINSNQEHKESLDQDLRSIFMMRPIRGIPLYQNQVLDHYYYSSTSPNPFFFSEVNGQHASRRLITNPNCSFNLHNRHRRQAQPQPPRFTAKRGVRAPRMRWTTTLHAHFVHAVQLLGGHERATPKSVLELMDVQDLTLAHVKSHLQMYRTIKSTEKPTTSSGQSDCENGSQVNSEREARNLTGLWNNSSSEARFQLKAKASSGVDISSNENEWKNRRCPSNERLSSDSSSLTGTRPETETPNLDFTLATPNLSP.

Residues Met-1–Glu-35 are disordered. Residues Arg-17–Glu-35 are compositionally biased toward basic and acidic residues. The HTH myb-type domain maps to Gly-161–Ser-221. The segment at residues Pro-192–Arg-217 is a DNA-binding region (H-T-H motif). Disordered stretches follow at residues Thr-222–Arg-244 and Lys-267–Pro-322. Polar residues-rich tracts occupy residues Lys-224 to Asn-241 and Leu-299 to Pro-322.

In terms of tissue distribution, expressed in developing phloem.

It localises to the nucleus. Probable transcription factor that regulates lateral organ polarity. Plays a role in lateral root formation and development. The chain is Probable transcription factor KAN3 (KAN3) from Arabidopsis thaliana (Mouse-ear cress).